The following is a 485-amino-acid chain: Protein nucleotidyltransferase YdiU (485 aa).

8 residues coordinate ATP: Gly-90, Gly-92, Arg-93, Lys-113, Asp-125, Gly-126, Arg-176, and Arg-183. Residue Asp-252 is the Proton acceptor of the active site. Mg(2+) contacts are provided by Asn-253 and Asp-262. Asp-262 provides a ligand contact to ATP.

The protein belongs to the SELO family. Mg(2+) serves as cofactor. It depends on Mn(2+) as a cofactor.

The enzyme catalyses L-seryl-[protein] + ATP = 3-O-(5'-adenylyl)-L-seryl-[protein] + diphosphate. The catalysed reaction is L-threonyl-[protein] + ATP = 3-O-(5'-adenylyl)-L-threonyl-[protein] + diphosphate. It carries out the reaction L-tyrosyl-[protein] + ATP = O-(5'-adenylyl)-L-tyrosyl-[protein] + diphosphate. It catalyses the reaction L-histidyl-[protein] + UTP = N(tele)-(5'-uridylyl)-L-histidyl-[protein] + diphosphate. The enzyme catalyses L-seryl-[protein] + UTP = O-(5'-uridylyl)-L-seryl-[protein] + diphosphate. The catalysed reaction is L-tyrosyl-[protein] + UTP = O-(5'-uridylyl)-L-tyrosyl-[protein] + diphosphate. Its function is as follows. Nucleotidyltransferase involved in the post-translational modification of proteins. It can catalyze the addition of adenosine monophosphate (AMP) or uridine monophosphate (UMP) to a protein, resulting in modifications known as AMPylation and UMPylation. This is Protein nucleotidyltransferase YdiU from Aliivibrio fischeri (strain MJ11) (Vibrio fischeri).